The sequence spans 77 residues: Acyl carrier protein (77 aa).

In terms of domain architecture, Carrier spans 2-77; the sequence is SDVADRVKKI…DAVKFISEAS (76 aa). S37 bears the O-(pantetheine 4'-phosphoryl)serine mark.

It belongs to the acyl carrier protein (ACP) family. In terms of processing, 4'-phosphopantetheine is transferred from CoA to a specific serine of apo-ACP by AcpS. This modification is essential for activity because fatty acids are bound in thioester linkage to the sulfhydryl of the prosthetic group.

Its subcellular location is the cytoplasm. It participates in lipid metabolism; fatty acid biosynthesis. Carrier of the growing fatty acid chain in fatty acid biosynthesis. The sequence is that of Acyl carrier protein from Ruegeria sp. (strain TM1040) (Silicibacter sp.).